A 494-amino-acid polypeptide reads, in one-letter code: MFS-type transporter lnaF (494 aa).

Positions 1–51 (MTYDPENAMGEARADAPVEAEKEHEATQTTVKESTLGYDNSSDPSRRDSYR) are disordered. Residues 12–26 (ARADAPVEAEKEHEA) are compositionally biased toward basic and acidic residues. N-linked (GlcNAc...) asparagine glycans are attached at residues Asn-40, Asn-58, and Asn-68. 10 helical membrane-spanning segments follow: residues 105 to 125 (SLLI…DMFS), 128 to 148 (AGLL…TLAL), 156 to 176 (MLWY…GEYP), 203 to 223 (TLMA…CLIA), 228 to 248 (LPVT…IIMV), 290 to 310 (LAFF…STII), 323 to 343 (AIWQ…GAWL), 354 to 374 (ILGF…FPHL), 383 to 403 (VLYG…IGLI), and 446 to 466 (STFY…WFLP).

This sequence belongs to the major facilitator superfamily. Sugar transporter (TC 2.A.1.1) family.

The protein localises to the cell membrane. MFS-type transporter; part of the lna gene cluster that mediates the biosynthesis of diastereomeric piperazines. Lna and lnb clusters encode sets of enzymes that produce overlapping sets of previously undescribed metabolites such as piperazinomycin-like metabolites or morpholine. The lna and lnb biosynthetic pathways appear to be part of a signaling network that controls the formation of sclerotia, a resilient overwintering structure. May be involved in the secretion of the metabolites produced by the lna and lnb clusters. The chain is MFS-type transporter lnaF from Aspergillus flavus (strain ATCC 200026 / FGSC A1120 / IAM 13836 / NRRL 3357 / JCM 12722 / SRRC 167).